Here is a 550-residue protein sequence, read N- to C-terminus: Chaperonin GroEL (550 aa).

ATP-binding positions include 30 to 33 (TLGP), K51, 87 to 91 (DGTTT), G415, 480 to 482 (NAA), and D496.

Belongs to the chaperonin (HSP60) family. Forms a cylinder of 14 subunits composed of two heptameric rings stacked back-to-back. Interacts with the co-chaperonin GroES.

It localises to the cytoplasm. It carries out the reaction ATP + H2O + a folded polypeptide = ADP + phosphate + an unfolded polypeptide.. Its function is as follows. Together with its co-chaperonin GroES, plays an essential role in assisting protein folding. The GroEL-GroES system forms a nano-cage that allows encapsulation of the non-native substrate proteins and provides a physical environment optimized to promote and accelerate protein folding. This chain is Chaperonin GroEL, found in Variovorax paradoxus (strain S110).